Consider the following 190-residue polypeptide: MGKSKKQKEEMLAGIKQNLSESQLALVINYQGLSVAEITDLRRRLIPTGSICSIAKNTLMGIAVKEDSNWQPMEDLLAGSNAFLFLKNDIGGAIKAYQDFQKATKKTEFKGGVMEGRLLDKDQVKAIADLPSKEELLAQVAGAINNIATKLAISLDAVPTQLATGINEVPASVNRAIKAISDKEQQGDAA.

This sequence belongs to the universal ribosomal protein uL10 family. In terms of assembly, part of the ribosomal stalk of the 50S ribosomal subunit. The N-terminus interacts with L11 and the large rRNA to form the base of the stalk. The C-terminus forms an elongated spine to which L12 dimers bind in a sequential fashion forming a multimeric L10(L12)X complex.

Forms part of the ribosomal stalk, playing a central role in the interaction of the ribosome with GTP-bound translation factors. The chain is Large ribosomal subunit protein uL10 from Trichodesmium erythraeum (strain IMS101).